A 134-amino-acid chain; its full sequence is Large ribosomal subunit protein bL12 (134 aa).

Belongs to the bacterial ribosomal protein bL12 family. As to quaternary structure, homodimer. Part of the ribosomal stalk of the 50S ribosomal subunit. Forms a multimeric L10(L12)X complex, where L10 forms an elongated spine to which 2 to 4 L12 dimers bind in a sequential fashion. Binds GTP-bound translation factors.

In terms of biological role, forms part of the ribosomal stalk which helps the ribosome interact with GTP-bound translation factors. Is thus essential for accurate translation. The protein is Large ribosomal subunit protein bL12 of Chlamydia abortus (strain DSM 27085 / S26/3) (Chlamydophila abortus).